Consider the following 332-residue polypeptide: Fructose-1,6-bisphosphatase class 1 (332 aa).

Residues Glu91, Asp112, Leu114, and Asp115 each contribute to the Mg(2+) site. Residues 115-118, Asn208, Tyr241, and Lys271 each bind substrate; that span reads DGSS. Glu277 lines the Mg(2+) pocket.

Belongs to the FBPase class 1 family. As to quaternary structure, homotetramer. The cofactor is Mg(2+).

The protein resides in the cytoplasm. It carries out the reaction beta-D-fructose 1,6-bisphosphate + H2O = beta-D-fructose 6-phosphate + phosphate. It participates in carbohydrate biosynthesis; Calvin cycle. The sequence is that of Fructose-1,6-bisphosphatase class 1 from Chlorobium phaeobacteroides (strain DSM 266 / SMG 266 / 2430).